Reading from the N-terminus, the 208-residue chain is 3-demethoxyubiquinol 3-hydroxylase (208 aa).

Fe cation-binding residues include glutamate 57, glutamate 87, histidine 90, glutamate 139, glutamate 171, and histidine 174.

Belongs to the COQ7 family. Requires Fe cation as cofactor.

The protein resides in the cell membrane. The enzyme catalyses a 5-methoxy-2-methyl-3-(all-trans-polyprenyl)benzene-1,4-diol + AH2 + O2 = a 3-demethylubiquinol + A + H2O. Its pathway is cofactor biosynthesis; ubiquinone biosynthesis. Catalyzes the hydroxylation of 2-nonaprenyl-3-methyl-6-methoxy-1,4-benzoquinol during ubiquinone biosynthesis. In Burkholderia pseudomallei (strain 1106a), this protein is 3-demethoxyubiquinol 3-hydroxylase.